The following is a 237-amino-acid chain: Phosphoribosylaminoimidazole-succinocarboxamide synthase (237 aa).

It belongs to the SAICAR synthetase family.

The enzyme catalyses 5-amino-1-(5-phospho-D-ribosyl)imidazole-4-carboxylate + L-aspartate + ATP = (2S)-2-[5-amino-1-(5-phospho-beta-D-ribosyl)imidazole-4-carboxamido]succinate + ADP + phosphate + 2 H(+). The protein operates within purine metabolism; IMP biosynthesis via de novo pathway; 5-amino-1-(5-phospho-D-ribosyl)imidazole-4-carboxamide from 5-amino-1-(5-phospho-D-ribosyl)imidazole-4-carboxylate: step 1/2. In Escherichia coli O7:K1 (strain IAI39 / ExPEC), this protein is Phosphoribosylaminoimidazole-succinocarboxamide synthase.